We begin with the raw amino-acid sequence, 330 residues long: Src kinase-associated phosphoprotein 2-A (330 aa).

The tract at residues 53–77 (QDFQDKAETDDQEENDGFSLPPDAV) is disordered. The 104-residue stretch at 105 to 208 (DYLRAGYLEK…WINVIMNARG (104 aa)) folds into the PH domain. Positions 228-261 (SHEEDIYEELPEESEKPVTGSETPKATPVPVNNT) are disordered. Positions 247–261 (GSETPKATPVPVNNT) are enriched in polar residues. The 62-residue stretch at 268–329 (DYANFYRGLW…PKAYIIEMYD (62 aa)) folds into the SH3 domain.

The protein belongs to the SKAP family. In terms of processing, phosphorylated on tyrosines.

It is found in the cytoplasm. In terms of biological role, may be involved in B-cell and macrophage adhesion processes. May play a role in src signaling pathway. In Xenopus laevis (African clawed frog), this protein is Src kinase-associated phosphoprotein 2-A (skap2-a).